Reading from the N-terminus, the 253-residue chain is Ribosomal RNA small subunit methyltransferase A (253 aa).

S-adenosyl-L-methionine contacts are provided by H12, L14, G39, E60, D81, and N104.

This sequence belongs to the class I-like SAM-binding methyltransferase superfamily. rRNA adenine N(6)-methyltransferase family. RsmA subfamily.

Its subcellular location is the cytoplasm. It catalyses the reaction adenosine(1518)/adenosine(1519) in 16S rRNA + 4 S-adenosyl-L-methionine = N(6)-dimethyladenosine(1518)/N(6)-dimethyladenosine(1519) in 16S rRNA + 4 S-adenosyl-L-homocysteine + 4 H(+). Its function is as follows. Specifically dimethylates two adjacent adenosines (A1518 and A1519) in the loop of a conserved hairpin near the 3'-end of 16S rRNA in the 30S particle. May play a critical role in biogenesis of 30S subunits. The protein is Ribosomal RNA small subunit methyltransferase A of Paracidovorax citrulli (strain AAC00-1) (Acidovorax citrulli).